Reading from the N-terminus, the 595-residue chain is 3-hydroxy-3-methylglutaryl-coenzyme A reductase 2 (595 aa).

An N-linked (GlcNAc...) asparagine glycan is attached at N35. Helical transmembrane passes span 48–68 (LPLY…MYFL) and 92–112 (AIVS…IGFV). Residues 113–183 (QTFVSRGNND…SPLITPASSE (71 aa)) form a linker region. N121 carries an N-linked (GlcNAc...) asparagine glycan. Residues 184-595 (EDEEIINSVV…KYNRSTKASS (412 aa)) form a catalytic region. E278 functions as the Charge relay system in the catalytic mechanism. N342 carries an N-linked (GlcNAc...) asparagine glycan. K410 functions as the Charge relay system in the catalytic mechanism. Residue N455 is glycosylated (N-linked (GlcNAc...) asparagine). D486 acts as the Charge relay system in catalysis. The active-site Proton donor is H584. Residue N588 is glycosylated (N-linked (GlcNAc...) asparagine).

The protein belongs to the HMG-CoA reductase family. Expressed in young flowers and in mature sepals and ovaries.

The protein resides in the endoplasmic reticulum membrane. The catalysed reaction is (R)-mevalonate + 2 NADP(+) + CoA = (3S)-3-hydroxy-3-methylglutaryl-CoA + 2 NADPH + 2 H(+). It participates in metabolic intermediate biosynthesis; (R)-mevalonate biosynthesis; (R)-mevalonate from acetyl-CoA: step 3/3. Catalyzes the synthesis of mevalonate. The specific precursor of all isoprenoid compounds present in plants. The sequence is that of 3-hydroxy-3-methylglutaryl-coenzyme A reductase 2 (HMG2) from Solanum tuberosum (Potato).